Here is a 133-residue protein sequence, read N- to C-terminus: uncharacterized protein (133 aa).

4 consecutive transmembrane segments (helical) span residues lysine 5–isoleucine 27, isoleucine 42–tyrosine 64, alanine 77–serine 99, and leucine 103–lysine 125.

It is found in the cell membrane. This is an uncharacterized protein from Bacillus subtilis (strain 168).